A 160-amino-acid chain; its full sequence is Keratin-associated protein 9-6 (160 aa).

Repeat copies occupy residues Cys-4 to Gly-8, Cys-13 to Thr-17, Cys-18 to Thr-22, Cys-37 to Ser-41, Cys-42 to Ser-46, Cys-47 to Tyr-51, Cys-56 to Thr-60, Cys-61 to Thr-65, Cys-66 to Thr-70, Cys-75 to Ser-79, Cys-80 to Pro-84, Cys-90 to Ser-94, Cys-95 to Thr-99, Cys-140 to Cys-144, Cys-149 to Ser-153, and Cys-154 to Ser-158. A 16 X 5 AA repeats of C-C-[GSVRQ]-[QTSPHN]-[TPSGYC] region spans residues Cys-4–Ser-158.

Belongs to the KRTAP type 9 family. As to quaternary structure, interacts with hair keratins.

Its function is as follows. In the hair cortex, hair keratin intermediate filaments are embedded in an interfilamentous matrix, consisting of hair keratin-associated proteins (KRTAP), which are essential for the formation of a rigid and resistant hair shaft through their extensive disulfide bond cross-linking with abundant cysteine residues of hair keratins. The matrix proteins include the high-sulfur and high-glycine-tyrosine keratins. This chain is Keratin-associated protein 9-6, found in Homo sapiens (Human).